Consider the following 505-residue polypeptide: Probable alpha-L-arabinofuranosidase C (505 aa).

N-linked (GlcNAc...) asparagine glycosylation is found at Asn81, Asn152, Asn269, and Asn438.

The protein belongs to the glycosyl hydrolase 51 family.

The protein resides in the secreted. It catalyses the reaction Hydrolysis of terminal non-reducing alpha-L-arabinofuranoside residues in alpha-L-arabinosides.. It participates in glycan metabolism; L-arabinan degradation. In terms of biological role, alpha-L-arabinofuranosidase involved in the degradation of arabinoxylan, a major component of plant hemicellulose. Acts only on small linear 1,5-alpha-linked L-arabinofuranosyl oligosaccharides. In Aspergillus fumigatus (strain ATCC MYA-4609 / CBS 101355 / FGSC A1100 / Af293) (Neosartorya fumigata), this protein is Probable alpha-L-arabinofuranosidase C (abfC).